A 398-amino-acid polypeptide reads, in one-letter code: Alpha-2,8-sialyltransferase 8F (398 aa).

The Cytoplasmic portion of the chain corresponds to 1-3; that stretch reads MRP. The helical; Signal-anchor for type II membrane protein transmembrane segment at 4 to 24 threads the bilayer; the sequence is GGALLALLASLLLLLLLRLLW. Residues 25 to 398 lie on the Lumenal side of the membrane; it reads CPADAPGRAR…KLQFSKCEVA (374 aa). N-linked (GlcNAc...) asparagine glycans are attached at residues Asn66, Asn93, Asn151, and Asn196. 2 cysteine pairs are disulfide-bonded: Cys186/Cys335 and Cys200/Cys395. Residues Asn214, 236–238, and 322–324 contribute to the substrate site; these read NPS and STG. Residue His370 is the Proton donor/acceptor of the active site.

This sequence belongs to the glycosyltransferase 29 family.

It is found in the golgi apparatus membrane. It carries out the reaction a ganglioside GM3 + CMP-N-acetyl-beta-neuraminate = a ganglioside GD3 + CMP + H(+). The enzyme catalyses a ganglioside GM3 (d18:1(4E)) + CMP-N-acetyl-beta-neuraminate = a ganglioside GD3 (d18:1(4E)) + CMP + H(+). The catalysed reaction is a ganglioside GD1a (d18:1(4E)) + CMP-N-acetyl-beta-neuraminate = a ganglioside GT1a (d18:1(4E)) + CMP + H(+). It catalyses the reaction a ganglioside GD1a + CMP-N-acetyl-beta-neuraminate = a ganglioside GT1a + CMP + H(+). It carries out the reaction a ganglioside GM1b (d18:1(4E)) + CMP-N-acetyl-beta-neuraminate = a ganglioside GD1c (d18:1(4E)) + CMP + H(+). The enzyme catalyses a ganglioside GM1b + CMP-N-acetyl-beta-neuraminate = a ganglioside GD1c + CMP + H(+). The catalysed reaction is a ganglioside GM4 (d18:1(4E)) + CMP-N-acetyl-beta-neuraminate = an N-acetyl-alpha-neuraminosyl-(2-&gt;8)-N-acetyl-alpha-neuraminosyl-(2-&gt;3)-beta-D-galactosyl-(1&lt;-&gt;1')-N-acylsphing-4-enine + CMP + H(+). It catalyses the reaction N-acetyl-alpha-neuraminosyl-(2-&gt;3)-beta-D-galactosyl-(1&lt;-&gt;1')-ceramide + CMP-N-acetyl-beta-neuraminate = N-acetyl-alpha-neuraminosyl-(2-&gt;8)-N-acetyl-alpha-neuraminosyl-(2-&gt;3)-beta-D-galactosyl-(1&lt;-&gt;1')-ceramide + CMP + H(+). It carries out the reaction a ganglioside GT1b (d18:1(4E)) + CMP-N-acetyl-beta-neuraminate = a ganglioside GQ1b (d18:1(4E)) + CMP + H(+). The enzyme catalyses a ganglioside GT1b + CMP-N-acetyl-beta-neuraminate = a ganglioside GQ1b + CMP + H(+). The protein operates within protein modification; protein glycosylation. Functionally, alpha-2,8-sialyltransferase that prefers O-glycans to N-glycans or glycolipids as acceptor substrates. The minimal acceptor substrate is the NeuAc-alpha-2,3(6)-Gal sequence at the non-reducing end of their carbohydrate groups. The polypeptide is Alpha-2,8-sialyltransferase 8F (Homo sapiens (Human)).